The following is a 466-amino-acid chain: Soluble pyridine nucleotide transhydrogenase (466 aa).

FAD is bound at residue 36-45 (ERYQNVGGGC).

Belongs to the class-I pyridine nucleotide-disulfide oxidoreductase family. Requires FAD as cofactor.

The protein resides in the cytoplasm. It catalyses the reaction NAD(+) + NADPH = NADH + NADP(+). Its function is as follows. Conversion of NADPH, generated by peripheral catabolic pathways, to NADH, which can enter the respiratory chain for energy generation. The sequence is that of Soluble pyridine nucleotide transhydrogenase from Escherichia coli O9:H4 (strain HS).